We begin with the raw amino-acid sequence, 415 residues long: Alditol oxidase (415 aa).

An FAD-binding PCMH-type domain is found at 12-179; it reads ITYTAKEVHR…TALTLDLEPA (168 aa). H46 carries the pros-8alpha-FAD histidine modification. FAD is bound by residues S106, S111, G114, 118 to 121, and V169; that span reads TGTH. Residue S106 participates in xylitol binding. Xylitol contacts are provided by E317, R319, and T342. R319 provides a ligand contact to FAD. H369 provides a ligand contact to FAD. K372 is a binding site for xylitol.

This sequence belongs to the oxygen-dependent FAD-linked oxidoreductase family. In terms of assembly, monomer. FAD serves as cofactor.

The enzyme catalyses an alditol + O2 = an aldose + H2O2. It carries out the reaction xylitol + O2 = D-xylose + H2O2. It catalyses the reaction D-sorbitol + O2 = D-glucose + H2O2. In terms of biological role, oxidase that performs selective oxidation of the terminal primary hydroxyl group of several alditols, with a reduction of O2 to H2O2. Shows highest activity on xylitol and D-sorbitol, and to a lesser extent, can also use galactitol, D-mannitol, and D-arabitol as substrates in vitro. Is not active on D-glucose, D-xylose, D-galactose, D-mannose, D-fructose, L-sorbose, L-fucose, myoinositol, glycerol, ethyl alcohol, and meso-erythritol. In Streptomyces sp. (strain IKD472 / FERM P-14339), this protein is Alditol oxidase.